The primary structure comprises 687 residues: Glycine--tRNA ligase beta subunit (687 aa).

This sequence belongs to the class-II aminoacyl-tRNA synthetase family. In terms of assembly, tetramer of two alpha and two beta subunits.

It is found in the cytoplasm. The enzyme catalyses tRNA(Gly) + glycine + ATP = glycyl-tRNA(Gly) + AMP + diphosphate. The sequence is that of Glycine--tRNA ligase beta subunit from Geobacter sp. (strain M21).